Here is a 349-residue protein sequence, read N- to C-terminus: Diacylglycerol O-acyltransferase 2B (349 aa).

2 helical membrane-spanning segments follow: residues 44–64 (ICLIIYLYLFTIPLLWPILIM) and 114–134 (YIMSYHPHGIISMAAFANFAT).

This sequence belongs to the diacylglycerol acyltransferase family.

It localises to the endoplasmic reticulum membrane. It catalyses the reaction an acyl-CoA + a 1,2-diacyl-sn-glycerol = a triacyl-sn-glycerol + CoA. Its pathway is glycerolipid metabolism; triacylglycerol biosynthesis. In terms of biological role, catalyzes the terminal and only committed step in triacylglycerol synthesis by using diacylglycerol and fatty acyl CoA as substrates. Required for storage lipid synthesis. The sequence is that of Diacylglycerol O-acyltransferase 2B (DGAT2B) from Umbelopsis ramanniana (Oleaginous fungus).